The sequence spans 282 residues: WRKY transcription factor 71 (282 aa).

The segment at 63 to 121 is disordered; it reads LTSNSPVVSSSSNEGEPKENTNDKSDQMEDNEGDLHGVGESSKQLTKQGKKKGEKKERE. Positions 65-75 are enriched in low complexity; the sequence is SNSPVVSSSSN. Residues 77-99 show a composition bias toward basic and acidic residues; the sequence is GEPKENTNDKSDQMEDNEGDLHG. Residues 130–195 constitute a DNA-binding region (WRKY); it reads SEIDHLEDGY…YEGKHNHPIP (66 aa).

It belongs to the WRKY group II-c family.

It is found in the nucleus. Functionally, transcription factor. Interacts specifically with the W box (5'-(T)TGAC[CT]-3'), a frequently occurring elicitor-responsive cis-acting element. In Arabidopsis thaliana (Mouse-ear cress), this protein is WRKY transcription factor 71 (WRKY71).